We begin with the raw amino-acid sequence, 542 residues long: 3-(3-hydroxy-phenyl)propionate/3-hydroxycinnamic acid hydroxylase (542 aa).

FAD is bound by residues 10–39 (SVAI…VVER) and 278–288 (FVAGRVALIGD).

The protein belongs to the PheA/TfdB FAD monooxygenase family. It depends on FAD as a cofactor.

The catalysed reaction is 3-(3-hydroxyphenyl)propanoate + NADH + O2 + H(+) = 3-(2,3-dihydroxyphenyl)propanoate + NAD(+) + H2O. It carries out the reaction (2E)-3-(3-hydroxyphenyl)prop-2-enoate + NADH + O2 + H(+) = (2E)-3-(2,3-dihydroxyphenyl)prop-2-enoate + NAD(+) + H2O. It functions in the pathway aromatic compound metabolism; 3-phenylpropanoate degradation. Its function is as follows. Catalyzes the insertion of one atom of molecular oxygen into position 2 of the phenyl ring of 3-(3-hydroxyphenyl)propionate (3-HPP) and hydroxycinnamic acid (3HCI). In Burkholderia cenocepacia (strain HI2424), this protein is 3-(3-hydroxy-phenyl)propionate/3-hydroxycinnamic acid hydroxylase.